A 474-amino-acid polypeptide reads, in one-letter code: ERO1-like protein alpha (474 aa).

The signal sequence occupies residues 1–29 (MVSGCCRLDMSSYVSVLVLCSLLLWGSNS). Cystine bridges form between cysteine 40–cysteine 53, cysteine 42–cysteine 51, cysteine 90–cysteine 398, cysteine 99–cysteine 104, cysteine 99–cysteine 138, cysteine 104–cysteine 109, cysteine 215–cysteine 248, and cysteine 401–cysteine 404. The FAD site is built by arginine 194, threonine 196, and tryptophan 207. The FAD site is built by serine 259, histidine 262, arginine 294, and arginine 307. N-linked (GlcNAc...) asparagine glycosylation is found at asparagine 340 and asparagine 391. An N-linked (GlcNAc...) asparagine glycan is attached at asparagine 430.

This sequence belongs to the EROs family. In terms of assembly, predominantly monomer. May function both as a monomer and a homodimer. Requires FAD as cofactor. Post-translationally, the Cys-99/Cys-104 and Cys-401/Cys-404 disulfide bonds constitute the redox-active center. The Cys-99/Cys-104 disulfide bond may accept electron from protein disulfide isomerase (PDI) and funnel them to the active site disulfide Cys-401/Cys-404.

The protein resides in the endoplasmic reticulum membrane. With respect to regulation, enzyme activity is tightly regulated to prevent the accumulation of reactive oxygen species in the endoplasmic reticulum. Reversibly down-regulated by the formation of disulfide bonds between the active site Cys-99 and Cys-138, and between Cys-104 and Cys-109. Glutathione may be required to regulate its activity in the endoplasmic reticulum. Functionally, oxidoreductase involved in disulfide bond formation in the endoplasmic reticulum. Efficiently reoxidizes P4HB/PDI, the enzyme catalyzing protein disulfide formation, in order to allow P4HB to sustain additional rounds of disulfide formation. Following P4HB reoxidation, passes its electrons to molecular oxygen via FAD, leading to the production of reactive oxygen species (ROS) in the cell. Required for the folding of immunoglobulins. The polypeptide is ERO1-like protein alpha (Xenopus tropicalis (Western clawed frog)).